The following is a 911-amino-acid chain: Transcription factor E2F7 (911 aa).

Phosphoserine is present on Ser-94. Residues 141 to 210 mediate DNA binding; the sequence is RKQKSLGLLC…VAKNQYSWHG (70 aa). Disordered regions lie at residues 239 to 281, 409 to 433, and 565 to 706; these read QKEL…ANSR, SFNS…PYRQ, and SPGS…SPLQ. The segment covering 243-257 has biased composition (basic and acidic residues); that stretch reads NPIDHKSGERRRDGC. Residues 281 to 366 mediate DNA binding; that stretch reads RKDKSLKIMS…GRKPAFKWIG (86 aa). Ser-409 bears the Phosphoserine mark. The segment covering 415-424 has biased composition (basic and acidic residues); the sequence is ASERTQRKVN. Residues 566-579 are compositionally biased toward gly residues; that stretch reads PGSGSGSGSVGGGS. Over residues 599 to 621 the composition is skewed to basic and acidic residues; that stretch reads ERRLQEEEEEPATKRQCRDHEDG. The span at 669–687 shows a compositional bias: polar residues; that stretch reads KATTNGFVSSEWGNPCSNT. Residues 688–698 show a composition bias toward basic and acidic residues; it reads EIEKPSEENES. A Phosphoserine modification is found at Ser-840. A disordered region spans residues 873–911; it reads FFKTPGSLGDPVLRRKERNQSRSSSSAQRRLEISSGGTD.

Belongs to the E2F/DP family. As to quaternary structure, homodimer and heterodimer: mainly forms homodimers and, to a lesser extent, heterodimers with E2F8. Dimerization is important for DNA-binding. Interacts with HIF1A. Interacts with MN1.

The protein localises to the nucleus. Functionally, atypical E2F transcription factor that participates in various processes such as angiogenesis, polyploidization of specialized cells and DNA damage response. Mainly acts as a transcription repressor that binds DNA independently of DP proteins and specifically recognizes the E2 recognition site 5'-TTTC[CG]CGC-3'. Directly represses transcription of classical E2F transcription factors such as E2F1. Acts as a regulator of S-phase by recognizing and binding the E2-related site 5'-TTCCCGCC-3' and mediating repression of G1/S-regulated genes. Plays a key role in polyploidization of cells in placenta and liver by regulating the endocycle, probably by repressing genes promoting cytokinesis and antagonizing action of classical E2F proteins (E2F1, E2F2 and/or E2F3). Required for placental development by promoting polyploidization of trophoblast giant cells. Also involved in DNA damage response: up-regulated by p53/TP53 following genotoxic stress and acts as a downstream effector of p53/TP53-dependent repression by mediating repression of indirect p53/TP53 target genes involved in DNA replication. Acts as a promoter of sprouting angiogenesis, possibly by acting as a transcription activator: associates with HIF1A, recognizes and binds the VEGFA promoter, which is different from canonical E2 recognition site, and activates expression of the VEGFA gene. Acts as a negative regulator of keratinocyte differentiation. This is Transcription factor E2F7 (E2F7) from Bos taurus (Bovine).